The sequence spans 357 residues: Alanine racemase (357 aa).

Lys-35 acts as the Proton acceptor; specific for D-alanine in catalysis. An N6-(pyridoxal phosphate)lysine modification is found at Lys-35. Residue Arg-131 participates in substrate binding. The Proton acceptor; specific for L-alanine role is filled by Tyr-256. Substrate is bound at residue Met-304.

This sequence belongs to the alanine racemase family. Pyridoxal 5'-phosphate serves as cofactor.

The catalysed reaction is L-alanine = D-alanine. It functions in the pathway amino-acid biosynthesis; D-alanine biosynthesis; D-alanine from L-alanine: step 1/1. Functionally, catalyzes the interconversion of L-alanine and D-alanine. May also act on other amino acids. The protein is Alanine racemase (alr) of Legionella pneumophila (strain Paris).